Here is a 151-residue protein sequence, read N- to C-terminus: Small ribosomal subunit protein uS9 (151 aa).

It belongs to the universal ribosomal protein uS9 family.

The sequence is that of Small ribosomal subunit protein uS9 (RpS16) from Spodoptera frugiperda (Fall armyworm).